Consider the following 171-residue polypeptide: MKRAKKYPFLTLQRQRFHLNFENASSAAGIPAERDFYRWAWSALKNEYLRADIGLILLDEEEARAYNRDYRGKDYATNVLSFALNEGEILPCQVSERLYGDLIICPQVVLKEAAEQGKTPERHFAHLTIHGTLHLMGYDHIKDDEAEIMEAEEIRLMRAAGYPNPYREDGH.

His130, His134, and His140 together coordinate Zn(2+).

The protein belongs to the endoribonuclease YbeY family. The cofactor is Zn(2+).

The protein localises to the cytoplasm. Single strand-specific metallo-endoribonuclease involved in late-stage 70S ribosome quality control and in maturation of the 3' terminus of the 16S rRNA. The chain is Endoribonuclease YbeY from Neisseria gonorrhoeae (strain ATCC 700825 / FA 1090).